Reading from the N-terminus, the 501-residue chain is Lysine--tRNA ligase (501 aa).

Glu411 and Glu418 together coordinate Mg(2+).

Belongs to the class-II aminoacyl-tRNA synthetase family. As to quaternary structure, homodimer. The cofactor is Mg(2+).

Its subcellular location is the cytoplasm. The catalysed reaction is tRNA(Lys) + L-lysine + ATP = L-lysyl-tRNA(Lys) + AMP + diphosphate. The protein is Lysine--tRNA ligase of Clostridium perfringens (strain SM101 / Type A).